The primary structure comprises 380 residues: Crotonobetainyl-CoA reductase (380 aa).

The protein belongs to the acyl-CoA dehydrogenase family. As to quaternary structure, homotetramer. It depends on FAD as a cofactor.

The protein resides in the cytoplasm. It carries out the reaction 4-(trimethylamino)butanoyl-CoA + oxidized [electron-transfer flavoprotein] + H(+) = crotonobetainyl-CoA + reduced [electron-transfer flavoprotein]. Its pathway is amine and polyamine metabolism; carnitine metabolism. In terms of biological role, catalyzes the reduction of crotonobetainyl-CoA to gamma-butyrobetainyl-CoA. This Salmonella arizonae (strain ATCC BAA-731 / CDC346-86 / RSK2980) protein is Crotonobetainyl-CoA reductase.